Reading from the N-terminus, the 319-residue chain is MNHLSEKVISLKGRDLLTLLDYTPEEVQQLLTQALELKQKAKNGEPTPYLTGKSLGMIFENASTRTRVSFEVGMTQLGGHALFLSPKDLQIGRGEPIKDTANVLSRYVDAIMIRTNSHESVEELAHYATVPVINALTDAYHPCQALADALTILEKKETLIGKKLAYIGDGNNVCHSLLAIGAKTGMDVTVATPKGYEVDQEIFQRATEAAKETGATLVQTTNPQVAAENADAIYTDVWASMGYEAEQSEREEVFQPYQVNDQLLTLAKKDVSFLHCLPAHRGEEVTASVIDGPHSAIYDQAENRLHAQKAVLTALLIGE.

Carbamoyl phosphate contacts are provided by residues 63–66, glutamine 90, arginine 114, and 141–144; these read STRT and HPCQ. L-ornithine is bound by residues asparagine 172, aspartate 236, and 240 to 241; that span reads SM. Residues 276–277 and arginine 304 contribute to the carbamoyl phosphate site; that span reads CL.

It belongs to the aspartate/ornithine carbamoyltransferase superfamily. OTCase family.

The protein resides in the cytoplasm. It catalyses the reaction carbamoyl phosphate + L-ornithine = L-citrulline + phosphate + H(+). It functions in the pathway amino-acid biosynthesis; L-arginine biosynthesis; L-arginine from L-ornithine and carbamoyl phosphate: step 1/3. Functionally, reversibly catalyzes the transfer of the carbamoyl group from carbamoyl phosphate (CP) to the N(epsilon) atom of ornithine (ORN) to produce L-citrulline. The sequence is that of Ornithine carbamoyltransferase from Halalkalibacterium halodurans (strain ATCC BAA-125 / DSM 18197 / FERM 7344 / JCM 9153 / C-125) (Bacillus halodurans).